The following is a 114-amino-acid chain: Probable non-functional T cell receptor beta variable 5-3 (114 aa).

The N-terminal stretch at 1–21 is a signal peptide; the sequence is MGPGLLCWELLYLLGAGPVEA. An Ig-like domain is found at 22 to 114; the sequence is GVTQSPTHLI…SALYLCARSL (93 aa). The cysteines at positions 42 and 110 are disulfide-linked. The N-linked (GlcNAc...) asparagine glycan is linked to N96.

As to quaternary structure, alpha-beta TR is a heterodimer composed of an alpha and beta chain; disulfide-linked. The alpha-beta TR is associated with the transmembrane signaling CD3 coreceptor proteins to form the TR-CD3 (TcR or TCR). The assembly of alpha-beta TR heterodimers with CD3 occurs in the endoplasmic reticulum where a single alpha-beta TR heterodimer associates with one CD3D-CD3E heterodimer, one CD3G-CD3E heterodimer and one CD247 homodimer forming a stable octameric structure. CD3D-CD3E and CD3G-CD3E heterodimers preferentially associate with TR alpha and TR beta chains, respectively. The association of the CD247 homodimer is the last step of TcR assembly in the endoplasmic reticulum and is required for transport to the cell surface.

It localises to the cell membrane. In terms of biological role, probable non-functional open reading frame (ORF) of V region of the variable domain of T cell receptor (TR) beta chain. Non-functional ORF generally cannot participate in the synthesis of a productive T cell receptor (TR) chain due to altered V-(D)-J or switch recombination and/or splicing site (at mRNA level) and/or conserved amino acid change (protein level). Alpha-beta T cell receptors are antigen specific receptors which are essential to the immune response and are present on the cell surface of T lymphocytes. Recognize peptide-major histocompatibility (MH) (pMH) complexes that are displayed by antigen presenting cells (APC), a prerequisite for efficient T cell adaptive immunity against pathogens. Binding of alpha-beta TR to pMH complex initiates TR-CD3 clustering on the cell surface and intracellular activation of LCK that phosphorylates the ITAM motifs of CD3G, CD3D, CD3E and CD247 enabling the recruitment of ZAP70. In turn ZAP70 phosphorylates LAT, which recruits numerous signaling molecules to form the LAT signalosome. The LAT signalosome propagates signal branching to three major signaling pathways, the calcium, the mitogen-activated protein kinase (MAPK) kinase and the nuclear factor NF-kappa-B (NF-kB) pathways, leading to the mobilization of transcription factors that are critical for gene expression and essential for T cell growth and differentiation. The T cell repertoire is generated in the thymus, by V-(D)-J rearrangement. This repertoire is then shaped by intrathymic selection events to generate a peripheral T cell pool of self-MH restricted, non-autoaggressive T cells. Post-thymic interaction of alpha-beta TR with the pMH complexes shapes TR structural and functional avidity. The polypeptide is Probable non-functional T cell receptor beta variable 5-3 (Homo sapiens (Human)).